We begin with the raw amino-acid sequence, 284 residues long: MYVVSTKQMLNNAQRGGYAVPAFNIHNLETMQVVVETAANLHAPVIIAGTPGTFTYAGTENLLALVSAMAKQYHHPLAIHLDHHTKFDDIAQKVRSGVRSVMIDASHLPFAQNISRVKEVVDFCHRFDVSVEAELGQLGGQEDDVQVNEADVFYTNPAQAREFAEATGIDSLAVAIGTAHGMYASAPALDFSRLENIRQWVNLPLVLHGASGLSTKDIQQTIKLGICKINVATELKNAFSQALKNYLTEHPEATDPRDYLQSAKSAMRDVVSKVIADCGCEGRA.

Residue aspartate 82 is the Proton donor of the active site. Zn(2+)-binding residues include histidine 83 and histidine 180. Glycine 181 lines the dihydroxyacetone phosphate pocket. Histidine 208 is a binding site for Zn(2+). Dihydroxyacetone phosphate contacts are provided by residues 209–211 (GAS) and 230–233 (NVAT).

The protein belongs to the class II fructose-bisphosphate aldolase family. TagBP aldolase GatY subfamily. In terms of assembly, forms a complex with GatZ. It depends on Zn(2+) as a cofactor.

The catalysed reaction is D-tagatofuranose 1,6-bisphosphate = D-glyceraldehyde 3-phosphate + dihydroxyacetone phosphate. It functions in the pathway carbohydrate metabolism; D-tagatose 6-phosphate degradation; D-glyceraldehyde 3-phosphate and glycerone phosphate from D-tagatose 6-phosphate: step 2/2. Its function is as follows. Catalytic subunit of the tagatose-1,6-bisphosphate aldolase GatYZ, which catalyzes the reversible aldol condensation of dihydroxyacetone phosphate (DHAP or glycerone-phosphate) with glyceraldehyde 3-phosphate (G3P) to produce tagatose 1,6-bisphosphate (TBP). Requires GatZ subunit for full activity and stability. Is involved in the catabolism of galactitol. This Shigella sonnei (strain Ss046) protein is D-tagatose-1,6-bisphosphate aldolase subunit GatY.